The following is a 211-amino-acid chain: Redox-sensing transcriptional repressor Rex (211 aa).

A DNA-binding region (H-T-H motif) is located at residues 16-55 (LYYRYLLILNEEGKDKVSSTELSEAVQVDSASIRRDFSYF). Residue 90–95 (GVGNLG) participates in NAD(+) binding.

It belongs to the transcriptional regulatory Rex family. As to quaternary structure, homodimer.

It localises to the cytoplasm. Its function is as follows. Modulates transcription in response to changes in cellular NADH/NAD(+) redox state. In Lactobacillus acidophilus (strain ATCC 700396 / NCK56 / N2 / NCFM), this protein is Redox-sensing transcriptional repressor Rex.